A 347-amino-acid chain; its full sequence is Leucine-rich repeat-containing protein 69 (347 aa).

LRR repeat units lie at residues 38–60 (GLKT…CNLT), 61–82 (QLTT…MKYL), 84–105 (SLKN…ACDG), 108–129 (NLIL…VSRL), 131–153 (SLTY…CFLE), 154–175 (NLVE…IKFL), 177–199 (KLQK…CDLK), and 200–222 (KLRI…QDLK).

This sequence belongs to the LRRC69 family.

The sequence is that of Leucine-rich repeat-containing protein 69 (LRRC69) from Homo sapiens (Human).